The chain runs to 864 residues: Leucine--tRNA ligase (864 aa).

Positions 42 to 52 match the 'HIGH' region motif; it reads PYPSGKLHMGH. A 'KMSKS' region motif is present at residues 624 to 628; it reads KMSKS. Lys627 contacts ATP.

This sequence belongs to the class-I aminoacyl-tRNA synthetase family.

Its subcellular location is the cytoplasm. The enzyme catalyses tRNA(Leu) + L-leucine + ATP = L-leucyl-tRNA(Leu) + AMP + diphosphate. The polypeptide is Leucine--tRNA ligase (Burkholderia multivorans (strain ATCC 17616 / 249)).